Here is a 119-residue protein sequence, read N- to C-terminus: Membrane-anchored ubiquitin-fold protein 1 (119 aa).

The 67-residue stretch at 9–75 folds into the Ubiquitin-like domain; it reads FEIKFRLPDG…LENNKTLSEC (67 aa). At C116 the chain carries Cysteine methyl ester. C116 carries the S-farnesyl cysteine lipid modification. Residues 117–119 constitute a propeptide, removed in mature form; sequence SIM.

The protein localises to the cell membrane. Its function is as follows. May serve as docking site to facilitate the association of other proteins to the plasma membrane. In Oryza sativa subsp. japonica (Rice), this protein is Membrane-anchored ubiquitin-fold protein 1 (MUB1).